A 177-amino-acid polypeptide reads, in one-letter code: Large ribosomal subunit protein uL6 (177 aa).

The protein belongs to the universal ribosomal protein uL6 family. As to quaternary structure, part of the 50S ribosomal subunit.

In terms of biological role, this protein binds to the 23S rRNA, and is important in its secondary structure. It is located near the subunit interface in the base of the L7/L12 stalk, and near the tRNA binding site of the peptidyltransferase center. The sequence is that of Large ribosomal subunit protein uL6 from Magnetococcus marinus (strain ATCC BAA-1437 / JCM 17883 / MC-1).